A 251-amino-acid chain; its full sequence is Putative imidazole glycerol phosphate synthase subunit hisF2 (251 aa).

D130 is an active-site residue.

This sequence belongs to the HisA/HisF family. In terms of assembly, heterodimer of HisH and HisF.

The protein localises to the cytoplasm. It catalyses the reaction 5-[(5-phospho-1-deoxy-D-ribulos-1-ylimino)methylamino]-1-(5-phospho-beta-D-ribosyl)imidazole-4-carboxamide + L-glutamine = D-erythro-1-(imidazol-4-yl)glycerol 3-phosphate + 5-amino-1-(5-phospho-beta-D-ribosyl)imidazole-4-carboxamide + L-glutamate + H(+). Its pathway is amino-acid biosynthesis; L-histidine biosynthesis; L-histidine from 5-phospho-alpha-D-ribose 1-diphosphate: step 5/9. In terms of biological role, IGPS catalyzes the conversion of PRFAR and glutamine to IGP, AICAR and glutamate. The HisF subunit catalyzes the cyclization activity that produces IGP and AICAR from PRFAR using the ammonia provided by the HisH subunit. This chain is Putative imidazole glycerol phosphate synthase subunit hisF2 (hisF2), found in Pseudomonas aeruginosa (strain ATCC 15692 / DSM 22644 / CIP 104116 / JCM 14847 / LMG 12228 / 1C / PRS 101 / PAO1).